We begin with the raw amino-acid sequence, 341 residues long: Phosphoribosylformylglycinamidine cyclo-ligase (341 aa).

It belongs to the AIR synthase family.

It localises to the cytoplasm. The enzyme catalyses 2-formamido-N(1)-(5-O-phospho-beta-D-ribosyl)acetamidine + ATP = 5-amino-1-(5-phospho-beta-D-ribosyl)imidazole + ADP + phosphate + H(+). It functions in the pathway purine metabolism; IMP biosynthesis via de novo pathway; 5-amino-1-(5-phospho-D-ribosyl)imidazole from N(2)-formyl-N(1)-(5-phospho-D-ribosyl)glycinamide: step 2/2. This is Phosphoribosylformylglycinamidine cyclo-ligase from Agathobacter rectalis (strain ATCC 33656 / DSM 3377 / JCM 17463 / KCTC 5835 / VPI 0990) (Eubacterium rectale).